The chain runs to 220 residues: ATP synthase subunit beta, chloroplastic (220 aa).

It belongs to the ATPase alpha/beta chains family. In terms of assembly, F-type ATPases have 2 components, CF(1) - the catalytic core - and CF(0) - the membrane proton channel. CF(1) has five subunits: alpha(3), beta(3), gamma(1), delta(1), epsilon(1). CF(0) has four main subunits: a(1), b(1), b'(1) and c(9-12).

It is found in the plastid. The protein resides in the chloroplast thylakoid membrane. The catalysed reaction is ATP + H2O + 4 H(+)(in) = ADP + phosphate + 5 H(+)(out). In terms of biological role, produces ATP from ADP in the presence of a proton gradient across the membrane. The catalytic sites are hosted primarily by the beta subunits. The polypeptide is ATP synthase subunit beta, chloroplastic (atpB) (Osmundastrum cinnamomeum (Cinnamon fern)).